The following is a 231-amino-acid chain: Transmembrane gamma-carboxyglutamic acid protein 3 (231 aa).

The propeptide occupies methionine 1–arginine 19. The 46-residue stretch at alanine 20–asparagine 65 folds into the Gla domain. Residues alanine 20–aspartate 78 are Extracellular-facing. 13 positions are modified to 4-carboxyglutamate: glutamate 22, glutamate 25, glutamate 26, glutamate 33, glutamate 35, glutamate 38, glutamate 39, glutamate 44, glutamate 45, glutamate 48, glutamate 51, glutamate 54, and glutamate 58. A disulfide bridge connects residues cysteine 36 and cysteine 41. The helical transmembrane segment at alanine 79–tryptophan 101 threads the bilayer. The Cytoplasmic segment spans residues arginine 102–lysine 231. Disordered stretches follow at residues histidine 140–glycine 165 and leucine 182–lysine 231. Residues glutamate 202 to serine 213 show a composition bias toward low complexity.

In terms of processing, gla residues are produced after subsequent post-translational modifications of glutamate by a vitamin K-dependent gamma-carboxylase. In terms of tissue distribution, expressed in brain, lung, kidney and heart.

Its subcellular location is the membrane. The polypeptide is Transmembrane gamma-carboxyglutamic acid protein 3 (PRRG3) (Homo sapiens (Human)).